A 363-amino-acid polypeptide reads, in one-letter code: Flagellar P-ring protein (363 aa).

The signal sequence occupies residues 1–20 (MKYRLIVALAMLVLSLPSQA).

This sequence belongs to the FlgI family. In terms of assembly, the basal body constitutes a major portion of the flagellar organelle and consists of four rings (L,P,S, and M) mounted on a central rod.

The protein resides in the periplasm. Its subcellular location is the bacterial flagellum basal body. Assembles around the rod to form the L-ring and probably protects the motor/basal body from shearing forces during rotation. The chain is Flagellar P-ring protein from Shewanella sp. (strain ANA-3).